Here is a 701-residue protein sequence, read N- to C-terminus: Meprin A subunit beta (701 aa).

A signal peptide spans 1-22; it reads MDLWNLSWFLFLDALLVISGLA. The propeptide occupies 23–61; it reads TPENFDVDGGMDQDIFDINEGLGLDLFEGDIRLDRAQIR. Topologically, residues 23 to 652 are extracellular; the sequence is TPENFDVDGG…CEKRGSTRDT (630 aa). Residues 62–256 form the Peptidase M12A domain; it reads NSIIGEKYRW…LKLNQLYNCS (195 aa). Disulfide bonds link Cys103–Cys255, Cys124–Cys144, and Cys265–Cys427. His152 provides a ligand contact to Zn(2+). Glu153 is an active-site residue. His156 and His162 together coordinate Zn(2+). N-linked (GlcNAc...) asparagine glycosylation is found at Asn218, Asn254, Asn370, Asn421, Asn436, Asn445, Asn547, and Asn592. The 170-residue stretch at 260–429 folds into the MAM domain; sequence SFMDSCSFEL…INLSETRCPH (170 aa). The region spanning 430-585 is the MATH domain; sequence HIWHIRNFTQ…GDDVYILLTV (156 aa). O-linked (GalNAc...) serine glycosylation occurs at Ser593. O-linked (GalNAc...) threonine glycans are attached at residues Thr594 and Thr599. Residues 595–607 are required for proteolytic processing; the sequence is QIQLTPAPSVQDL. A glycan (O-linked (GalNAc...) serine) is linked at Ser603. An EGF-like domain is found at 604 to 644; it reads VQDLCSKTTCKNDGVCTVRDGKAECRCQSGEDWWYMGERCE. 3 disulfides stabilise this stretch: Cys608–Cys619, Cys613–Cys628, and Cys630–Cys643. Residues 653–673 form a helical membrane-spanning segment; that stretch reads IVIAVSSTVAVFALMLIITLV. At 674–701 the chain is on the cytoplasmic side; it reads SVYCTRKKYRERMSSNRPNLTPQNQHAF. Thr694 bears the Phosphothreonine mark.

In terms of assembly, homotetramer consisting of disulfide-linked beta subunits, or heterotetramer of two alpha and two beta subunits formed by non-covalent association of two disulfide-linked heterodimers. Interacts with MBL2 through its carbohydrate moiety. This interaction may inhibit its catalytic activity. Interacts with TSPAN8. It depends on Zn(2+) as a cofactor. Post-translationally, phosphorylated by PKC at multiple sites of its cytoplasmic part. Phosphorylation dcreases activity at the cell surface, leading to diminished substrate cleavage. In terms of processing, N-glycosylated; contains high mannose and/or complex biantennary structures. O-glycosylation protect the C-terminal region from proteolytic cleavage and diminish secretion, this seems to be specific to human. Post-translationally, proteolytically activated by trypsin in the intestinal lumen and kallikrein-related peptidases in other tissues. As to expression, the major site of expression is the brush border membrane of small intestinal and kidney epithelial cells.

The protein localises to the cell membrane. Its subcellular location is the secreted. It catalyses the reaction Hydrolysis of proteins, including azocasein, and peptides. Hydrolysis of 5-His-|-Leu-6, 6-Leu-|-Cys-7, 14-Ala-|-Leu-15 and 19-Cys-|-Gly-20 bonds in insulin B chain.. Strongly inhibited by fetuin-A/AHSG. Its function is as follows. Membrane metallopeptidase that sheds many membrane-bound proteins. Exhibits a strong preference for acidic amino acids at the P1' position. Known substrates include: FGF19, VGFA, IL1B, IL18, procollagen I and III, E-cadherin, KLK7, gastrin, ADAM10, tenascin-C. The presence of several pro-inflammatory cytokine among substrates implicate MEP1B in inflammation. It is also involved in tissue remodeling due to its capability to degrade extracellular matrix components. Also cleaves the amyloid precursor protein/APP, thereby releasing neurotoxic amyloid beta peptides. The sequence is that of Meprin A subunit beta (MEP1B) from Homo sapiens (Human).